Consider the following 305-residue polypeptide: GTPase Era (305 aa).

Positions 13-181 (RCGYVAIVGR…EKLVAERLPE (169 aa)) constitute an Era-type G domain. The tract at residues 21–28 (GRPNVGKS) is G1. Position 21–28 (21–28 (GRPNVGKS)) interacts with GTP. The interval 47-51 (QTTRH) is G2. Residues 68–71 (DTPG) are G3. GTP contacts are provided by residues 68–72 (DTPGL) and 130–133 (NKTD). Residues 130 to 133 (NKTD) form a G4 region. A G5 region spans residues 160 to 162 (ISA). Residues 204 to 288 (VREKIMRQLG…MLNLWVKVKG (85 aa)) form the KH type-2 domain.

The protein belongs to the TRAFAC class TrmE-Era-EngA-EngB-Septin-like GTPase superfamily. Era GTPase family. Monomer.

It localises to the cytoplasm. The protein localises to the cell inner membrane. In terms of biological role, an essential GTPase that binds both GDP and GTP, with rapid nucleotide exchange. Plays a role in 16S rRNA processing and 30S ribosomal subunit biogenesis and possibly also in cell cycle regulation and energy metabolism. The polypeptide is GTPase Era (Pseudomonas aeruginosa (strain LESB58)).